The chain runs to 253 residues: MSTIGTGYDLSASQFSPDGRVFQIDYASKAVEKSGTVIGIRGKDAVVLAVEKIITSKLYEPDAGGRIFTIEKNIGMAVAGLVADGNFVADIARQEAANYRQQFEQAIPLKHLCHRVAGYVHAYTLYSAVRPFGLSIILASWDEVEGPQLYKIEPSGSSFGYFACASGKAKQLAKTEMEKLKMDMRTDELVESAGEIIYKVHDELKDKDFRFEMGLVGRVTGGLHLINPSELTEKARKAGDAANKDEDSDNETH.

Positions 230–253 are disordered; it reads ELTEKARKAGDAANKDEDSDNETH. Basic and acidic residues predominate over residues 231-253; it reads LTEKARKAGDAANKDEDSDNETH. The residue at position 248 (S248) is a Phosphoserine.

It belongs to the peptidase T1A family. As to quaternary structure, the 26S proteasome consists of a 20S proteasome core and two 19S regulatory subunits. The 20S proteasome core is composed of 28 subunits that are arranged in four stacked rings, resulting in a barrel-shaped structure. The two end rings are each formed by seven alpha subunits, and the two central rings are each formed by seven beta subunits. The catalytic chamber with the active sites is on the inside of the barrel. Interacts with ntc.

The protein localises to the cytoplasm. It localises to the nucleus. Its function is as follows. The proteasome is a multicatalytic proteinase complex which is characterized by its ability to cleave peptides with Arg, Phe, Tyr, Leu, and Glu adjacent to the leaving group at neutral or slightly basic pH. The proteasome has an ATP-dependent proteolytic activity. This is Proteasome subunit alpha type-3 (Prosalpha7) from Drosophila melanogaster (Fruit fly).